The following is a 225-amino-acid chain: 7-carboxy-7-deazaguanine synthase (225 aa).

Substrate is bound by residues 12–14 (IQG) and arginine 27. One can recognise a Radical SAM core domain in the interval 18–225 (YIGVRQLFVR…PQVHKYLGVR (208 aa)). [4Fe-4S] cluster is bound by residues cysteine 31, cysteine 35, and cysteine 38. Mg(2+) is bound at residue threonine 40. Threonine 80 is a binding site for substrate. S-adenosyl-L-methionine is bound at residue glycine 82.

This sequence belongs to the radical SAM superfamily. 7-carboxy-7-deazaguanine synthase family. Homodimer. It depends on [4Fe-4S] cluster as a cofactor. Requires S-adenosyl-L-methionine as cofactor. Mg(2+) serves as cofactor.

It catalyses the reaction 6-carboxy-5,6,7,8-tetrahydropterin + H(+) = 7-carboxy-7-deazaguanine + NH4(+). Its pathway is purine metabolism; 7-cyano-7-deazaguanine biosynthesis. Its function is as follows. Catalyzes the complex heterocyclic radical-mediated conversion of 6-carboxy-5,6,7,8-tetrahydropterin (CPH4) to 7-carboxy-7-deazaguanine (CDG), a step common to the biosynthetic pathways of all 7-deazapurine-containing compounds. The protein is 7-carboxy-7-deazaguanine synthase of Archaeoglobus fulgidus (strain ATCC 49558 / DSM 4304 / JCM 9628 / NBRC 100126 / VC-16).